A 125-amino-acid polypeptide reads, in one-letter code: uncharacterized protein (125 aa).

A run of 2 helical transmembrane segments spans residues 28-48 (VFIT…SQFC) and 54-74 (FFLP…LFFF).

The protein resides in the membrane. This is an uncharacterized protein from Saccharomyces cerevisiae (strain ATCC 204508 / S288c) (Baker's yeast).